A 377-amino-acid chain; its full sequence is Transmembrane protein 237A (377 aa).

Composition is skewed to basic and acidic residues over residues Met1–Pro11, Leu43–Pro64, and His74–Asn87. Residues Met1 to Glu124 form a disordered region. The next 4 membrane-spanning stretches (helical) occupy residues Ile198 to Val218, Leu239 to Phe259, Gly273 to Leu293, and Pro326 to Ala346.

The protein belongs to the TMEM237 family.

Its subcellular location is the membrane. It localises to the cell projection. The protein resides in the cilium. Component of the transition zone in primary cilia. Required for ciliogenesis. The sequence is that of Transmembrane protein 237A (tmem237a) from Danio rerio (Zebrafish).